The sequence spans 205 residues: NADH-quinone oxidoreductase subunit C (205 aa).

This sequence belongs to the complex I 30 kDa subunit family. NDH-1 is composed of 14 different subunits. Subunits NuoB, C, D, E, F, and G constitute the peripheral sector of the complex.

The protein resides in the cell inner membrane. It carries out the reaction a quinone + NADH + 5 H(+)(in) = a quinol + NAD(+) + 4 H(+)(out). In terms of biological role, NDH-1 shuttles electrons from NADH, via FMN and iron-sulfur (Fe-S) centers, to quinones in the respiratory chain. The immediate electron acceptor for the enzyme in this species is believed to be ubiquinone. Couples the redox reaction to proton translocation (for every two electrons transferred, four hydrogen ions are translocated across the cytoplasmic membrane), and thus conserves the redox energy in a proton gradient. The sequence is that of NADH-quinone oxidoreductase subunit C from Nitrosospira multiformis (strain ATCC 25196 / NCIMB 11849 / C 71).